A 177-amino-acid polypeptide reads, in one-letter code: Protein-export protein SecB (177 aa).

The tract at residues 1–22 (MSDENNSGAAAPEAQNPGQNAA) is disordered. Residues 8–22 (GAAAPEAQNPGQNAA) are compositionally biased toward low complexity.

This sequence belongs to the SecB family. Homotetramer, a dimer of dimers. One homotetramer interacts with 1 SecA dimer.

It is found in the cytoplasm. Its function is as follows. One of the proteins required for the normal export of preproteins out of the cell cytoplasm. It is a molecular chaperone that binds to a subset of precursor proteins, maintaining them in a translocation-competent state. It also specifically binds to its receptor SecA. The protein is Protein-export protein SecB of Paracoccus denitrificans (strain Pd 1222).